Reading from the N-terminus, the 448-residue chain is Probable protein phosphatase 2C 74 (448 aa).

The segment at Met-1–Glu-48 is disordered. A lipid anchor (N-myristoyl glycine) is attached at Gly-2. The span at Gly-27–Pro-37 shows a compositional bias: basic residues. Residues Thr-67–Leu-384 enclose the PPM-type phosphatase domain. Positions 103, 104, 329, and 375 each coordinate Mn(2+). The segment at His-401–Val-431 is disordered. Positions Asp-412–Pro-426 are enriched in low complexity.

This sequence belongs to the PP2C family. Interacts with KIN10. Mg(2+) serves as cofactor. The cofactor is Mn(2+). Expressed in the whole plant.

The protein localises to the cell membrane. The catalysed reaction is O-phospho-L-seryl-[protein] + H2O = L-seryl-[protein] + phosphate. It catalyses the reaction O-phospho-L-threonyl-[protein] + H2O = L-threonyl-[protein] + phosphate. Functionally, acts as a protein phosphatase. The chain is Probable protein phosphatase 2C 74 from Arabidopsis thaliana (Mouse-ear cress).